The primary structure comprises 289 residues: Diacylglycerol pyrophosphate phosphatase 1 (289 aa).

Residues 1-21 (MNRVSFIKTPFNIGAKWRLED) lie on the Vacuolar side of the membrane. A helical membrane pass occupies residues 22-42 (VFLLIIMILLNYPVYYQQPFE). The Cytoplasmic portion of the chain corresponds to 43 to 65 (RQFYINDLTISHPYATTERVNNN). A helical transmembrane segment spans residues 66 to 86 (MLFVYSFVVPSLTILIIGSIL). The Vacuolar portion of the chain corresponds to 87-92 (ADRRHL). A helical transmembrane segment spans residues 93 to 113 (IFILYTSLLGLSLAWFSTSFF). Over 114–172 (TNFIKNWIGRLRPDFLDRCQPVEGLPLDTLFTAKDVCTTKNHERLLDGFRTTPSGHSSE) the chain is Cytoplasmic. The segment at 118–126 (KNWIGRLRP) is phosphatase sequence motif I. The segment at 166–169 (PSGH) is phosphatase sequence motif II. The next 2 membrane-spanning stretches (helical) occupy residues 173–193 (SFAG…TESP) and 194–214 (LMPL…ALIA). The Cytoplasmic portion of the chain corresponds to 215-222 (LSRTQDYR). Positions 216-227 (SRTQDYRHHFVD) are phosphatase sequence motif III. Residues 223 to 243 (HHFVDVILGSMLGYIMAHFFY) form a helical membrane-spanning segment. The Vacuolar segment spans residues 244–289 (RRIFPPIDDPLPFKPLMDDSDVTLEEAVTHQRIPDEELHPLSDEGM). Position 285 is a phosphoserine (Ser-285).

This sequence belongs to the PA-phosphatase related phosphoesterase family.

It localises to the vacuole membrane. The enzyme catalyses a 1,2-diacyl-sn-glycerol 3-diphosphate + H2O = a 1,2-diacyl-sn-glycero-3-phosphate + phosphate + H(+). It carries out the reaction a 1,2-diacyl-sn-glycero-3-phosphate + H2O = a 1,2-diacyl-sn-glycerol + phosphate. It catalyses the reaction a 1-acyl-sn-glycero-3-phosphate + H2O = a 1-acyl-sn-glycerol + phosphate. Its activity is regulated as follows. Inhibited by sodium fluoride (NaF) and pyrophosphate. Strongly inhibited by manganese ion and, to a lower extent, by magnesium and calcium ions. Also inhibited by Cu(2+) ion. In an indirect manner, it is also inhibited by the zinc ion which is able to form a complex with DGPP and prevent the enzyme from removing the phosphate from the substrate. Not inhibited by N-ethylmaleimide. In terms of biological role, catalyzes the dephosphorylation of diacylglycerol diphosphate (DGPP) to phosphatidate (PA) and the subsequent dephosphorylation of PA to diacylglycerol (DAG). Together with LPP1, regulates intracellular DGPP and PA levels, which are phospholipid molecules believed to play a signaling role in stress response. Can also use lysophosphatidic acid (LPA) and phosphatidylglycerophosphate as substrates. Substrate preference is DGPP &gt; LPA &gt; PA. Activity is independent of a divalent cation ion and insensitive to inhibition by N-ethylmaleimide. In Saccharomyces cerevisiae (strain ATCC 204508 / S288c) (Baker's yeast), this protein is Diacylglycerol pyrophosphate phosphatase 1 (DPP1).